The chain runs to 153 residues: Pheromone-binding protein Gp-9 (153 aa).

The first 19 residues, 1 to 19 (MKTFVLHIFIFALVAFASA), serve as a signal peptide directing secretion. Cystine bridges form between cysteine 37-cysteine 77, cysteine 73-cysteine 129, and cysteine 118-cysteine 138.

This sequence belongs to the PBP/GOBP family. As to quaternary structure, homodimer.

It is found in the secreted. Its function is as follows. Colony queen number, a major feature of social organization, is associated with worker genotype for Gp-9. Colonies are headed by either a single reproductive queen (monogyne form) or multiple queens (polygyne form). Differences in worker Gp-9 genotypes between social forms may cause differences in workers' abilities to recognize queens and regulate their numbers. This chain is Pheromone-binding protein Gp-9, found in Solenopsis sp. (strain B0-153) (Fire ant).